The following is a 239-amino-acid chain: tRNA (guanine-N(7)-)-methyltransferase (239 aa).

Residues Glu-69, Glu-94, Asp-121, and Asp-144 each coordinate S-adenosyl-L-methionine. The active site involves Asp-144. Lys-148 is a binding site for substrate. The interval 150-155 (RHNKRR) is interaction with RNA. Substrate-binding positions include Asp-180 and 217 to 220 (TKFE).

Belongs to the class I-like SAM-binding methyltransferase superfamily. TrmB family. Monomer.

It catalyses the reaction guanosine(46) in tRNA + S-adenosyl-L-methionine = N(7)-methylguanosine(46) in tRNA + S-adenosyl-L-homocysteine. It participates in tRNA modification; N(7)-methylguanine-tRNA biosynthesis. In terms of biological role, catalyzes the formation of N(7)-methylguanine at position 46 (m7G46) in tRNA. The protein is tRNA (guanine-N(7)-)-methyltransferase of Yersinia enterocolitica serotype O:8 / biotype 1B (strain NCTC 13174 / 8081).